Consider the following 156-residue polypeptide: Protein-export protein SecB (156 aa).

Belongs to the SecB family. In terms of assembly, homotetramer, a dimer of dimers. One homotetramer interacts with 1 SecA dimer.

It is found in the cytoplasm. In terms of biological role, one of the proteins required for the normal export of preproteins out of the cell cytoplasm. It is a molecular chaperone that binds to a subset of precursor proteins, maintaining them in a translocation-competent state. It also specifically binds to its receptor SecA. In Aliivibrio fischeri (strain ATCC 700601 / ES114) (Vibrio fischeri), this protein is Protein-export protein SecB.